The sequence spans 281 residues: 4-diphosphocytidyl-2-C-methyl-D-erythritol kinase (281 aa).

Lys15 is an active-site residue. 98-108 (PTGAGLGGGSS) provides a ligand contact to ATP. The active site involves Asp140.

It belongs to the GHMP kinase family. IspE subfamily.

The enzyme catalyses 4-CDP-2-C-methyl-D-erythritol + ATP = 4-CDP-2-C-methyl-D-erythritol 2-phosphate + ADP + H(+). Its pathway is isoprenoid biosynthesis; isopentenyl diphosphate biosynthesis via DXP pathway; isopentenyl diphosphate from 1-deoxy-D-xylulose 5-phosphate: step 3/6. In terms of biological role, catalyzes the phosphorylation of the position 2 hydroxy group of 4-diphosphocytidyl-2C-methyl-D-erythritol. The protein is 4-diphosphocytidyl-2-C-methyl-D-erythritol kinase of Neisseria gonorrhoeae (strain NCCP11945).